The primary structure comprises 764 residues: Dehydrocurvularin biosynthesis regulator (764 aa).

The segment at residues 28-59 (CWECKRRKMKCIFDPRITSTSCNGCRQRGSPC) is a DNA-binding region (zn(2)-C6 fungal-type). Disordered stretches follow at residues 73 to 94 (HGAN…SDDA), 112 to 136 (YRYL…ASTC), and 633 to 672 (FPTS…PALS). Over residues 77 to 88 (DSASLDASTPIA) the composition is skewed to polar residues. Polar residues predominate over residues 663–672 (HPNTPSPALS).

The protein localises to the nucleus. Functionally, transcription factor involved in regulation of the dehydrocurvularin biosynthesis gene cluster. This is Dehydrocurvularin biosynthesis regulator from Alternaria cinerariae.